The chain runs to 2617 residues: Ubiquitin carboxyl-terminal hydrolase 24 (2617 aa).

Residues 3 to 44 (SEEEQHMTTLLCMGFSDPATIRKALRLAKNDINEAVALLTNE) enclose the UBA domain. Positions 45–99 (RPGLDYGGYEPMDSGGPSPGPGGGPRGDSGSDGSGPSRGGSTGGGGGFDPPPAYH) are disordered. Serine 62 and serine 85 each carry phosphoserine. A compositionally biased stretch (gly residues) spans 65-92 (PGGGPRGDSGSDGSGPSRGGSTGGGGGF). Tyrosine 939 carries the post-translational modification Phosphotyrosine. Disordered stretches follow at residues 1030–1056 (KTSG…SGAF) and 1127–1148 (LLSE…QQHQ). Low complexity-rich tracts occupy residues 1031–1056 (TSGS…SGAF) and 1128–1148 (LSET…QQHQ). A phosphoserine mark is found at serine 1138 and serine 1282. In terms of domain architecture, USP spans 1686–2039 (VGLRNGGATC…NAYMLFYQRV (354 aa)). Residue cysteine 1695 is the Nucleophile of the active site. The interval 1920–1942 (QDSSSEVGENGRNMDQGGGGSPR) is disordered. Position 1940 is a phosphoserine (serine 1940). The active-site Proton acceptor is the histidine 1967. 3 positions are modified to phosphoserine: serine 2044, serine 2074, and serine 2558. Residues 2060 to 2087 (AEDLSLSAPSSPEISPQSSPRPHRPNND) are disordered. Positions 2066–2079 (SAPSSPEISPQSSP) are enriched in low complexity. Threonine 2562 carries the post-translational modification Phosphothreonine. Residues 2572–2617 (EKEQSGSSNGSESSPANENGERHLQQGSESPMMIGELRSDLDDVDP) are disordered. Positions 2576–2589 (SGSSNGSESSPANE) are enriched in low complexity. Position 2601 is a phosphoserine (serine 2601). A compositionally biased stretch (basic and acidic residues) spans 2608–2617 (LRSDLDDVDP).

It belongs to the peptidase C19 family.

It carries out the reaction Thiol-dependent hydrolysis of ester, thioester, amide, peptide and isopeptide bonds formed by the C-terminal Gly of ubiquitin (a 76-residue protein attached to proteins as an intracellular targeting signal).. In terms of biological role, protease that can remove conjugated ubiquitin from target proteins and polyubiquitin chains. Deubiquitinates DDB2, preventing its proteasomal degradation. The sequence is that of Ubiquitin carboxyl-terminal hydrolase 24 (Usp24) from Mus musculus (Mouse).